The following is a 1807-amino-acid chain: Vitellogenin-A2 (1807 aa).

An N-terminal signal peptide occupies residues 1-15 (MKGIVLALLLALAGS). Residues 24–664 (FSESKISVYN…SANTMFPVFI (641 aa)) form the Vitellogenin domain. The segment at 953–974 (TSAEGASMMEDSSEMGPKKYSA) is disordered. Asn1094 is a glycosylation site (N-linked (GlcNAc...) asparagine). The segment at 1095-1320 (ETALYRSKQK…SSESSSSSSE (226 aa)) is disordered. The span at 1101–1111 (SKQKKKNKIHN) shows a compositional bias: basic residues. Residues 1112–1123 (RRLDAEVVEARK) are compositionally biased toward basic and acidic residues. The span at 1126-1163 (SSLSSSSSSSSSSSSSSSSSSSSSSSSSPSSSSSSSYS) shows a compositional bias: low complexity. Residues 1187-1198 (QNKKRNLQENRK) show a composition bias toward basic and acidic residues. Positions 1205-1232 (SSSSSSSSSSSSSSSSSSSSSSSSSSSS) are enriched in low complexity. Residues 1233-1247 (EENRPHKNRQHDNKQ) are compositionally biased toward basic and acidic residues. Low complexity-rich tracts occupy residues 1263–1276 (SESS…SSSE) and 1309–1320 (SSSSESSSSSSE). The 179-residue stretch at 1536–1714 (GECKVAQDQI…SWILPAESCS (179 aa)) folds into the VWFD domain. 2 disulfide bridges follow: Cys1538–Cys1677 and Cys1561–Cys1713.

As to expression, produced by the liver, secreted into the blood and then sequestered by receptor mediated endocytosis into growing oocytes, where it is generally cleaved, giving rise to the respective yolk components.

Its function is as follows. Precursor of the major egg-yolk proteins that are sources of nutrients during early development of oviparous organisms. This is Vitellogenin-A2 from Xenopus laevis (African clawed frog).